Consider the following 95-residue polypeptide: Cobalt transport protein CbiN (95 aa).

The next 2 membrane-spanning stretches (helical) occupy residues 7–27 (IMLIAVAVIAIAPLVIYSGLG) and 67–87 (LLFALQAAIGALIIGYVFGYY).

Belongs to the CbiN family. As to quaternary structure, forms an energy-coupling factor (ECF) transporter complex composed of an ATP-binding protein (A component, CbiO), a transmembrane protein (T component, CbiQ) and 2 possible substrate-capture proteins (S components, CbiM and CbiN) of unknown stoichimetry.

It is found in the cell membrane. It functions in the pathway cofactor biosynthesis; adenosylcobalamin biosynthesis. Its function is as follows. Part of the energy-coupling factor (ECF) transporter complex CbiMNOQ involved in cobalt import. The chain is Cobalt transport protein CbiN from Methanothermobacter marburgensis (strain ATCC BAA-927 / DSM 2133 / JCM 14651 / NBRC 100331 / OCM 82 / Marburg) (Methanobacterium thermoautotrophicum).